The chain runs to 277 residues: Large ribosomal subunit protein uL2 (277 aa).

The segment at 222–277 is disordered; sequence GVAMNPVDHPHGGGEGRTSGGRHPVTPWGKPTKGKKTRSNKATDKFIMRSRHQRKK.

The protein belongs to the universal ribosomal protein uL2 family. In terms of assembly, part of the 50S ribosomal subunit. Forms a bridge to the 30S subunit in the 70S ribosome.

In terms of biological role, one of the primary rRNA binding proteins. Required for association of the 30S and 50S subunits to form the 70S ribosome, for tRNA binding and peptide bond formation. It has been suggested to have peptidyltransferase activity; this is somewhat controversial. Makes several contacts with the 16S rRNA in the 70S ribosome. The chain is Large ribosomal subunit protein uL2 from Brucella canis (strain ATCC 23365 / NCTC 10854 / RM-666).